A 218-amino-acid polypeptide reads, in one-letter code: 3-dehydroquinate dehydratase (218 aa).

3-dehydroquinate is bound by residues 29–31 and R56; that span reads EFR. The active-site Proton donor/acceptor is H116. The Schiff-base intermediate with substrate role is filled by K142. 3 residues coordinate 3-dehydroquinate: R180, S200, and Q204.

The protein belongs to the type-I 3-dehydroquinase family. In terms of assembly, homodimer.

The enzyme catalyses 3-dehydroquinate = 3-dehydroshikimate + H2O. Its pathway is metabolic intermediate biosynthesis; chorismate biosynthesis; chorismate from D-erythrose 4-phosphate and phosphoenolpyruvate: step 3/7. Involved in the third step of the chorismate pathway, which leads to the biosynthesis of aromatic amino acids. Catalyzes the cis-dehydration of 3-dehydroquinate (DHQ) and introduces the first double bond of the aromatic ring to yield 3-dehydroshikimate. This Methanococcus vannielii (strain ATCC 35089 / DSM 1224 / JCM 13029 / OCM 148 / SB) protein is 3-dehydroquinate dehydratase.